A 234-amino-acid polypeptide reads, in one-letter code: Geranylgeranylglyceryl phosphate synthase (234 aa).

Mg(2+) is bound by residues D24 and S52. Residues 172 to 178, 203 to 204, and 225 to 226 contribute to the sn-glycerol 1-phosphate site; these read YLEAGSG, GG, and GT.

Belongs to the GGGP/HepGP synthase family. Group II subfamily. As to quaternary structure, homodimer. It depends on Mg(2+) as a cofactor.

The enzyme catalyses sn-glycerol 1-phosphate + (2E,6E,10E)-geranylgeranyl diphosphate = sn-3-O-(geranylgeranyl)glycerol 1-phosphate + diphosphate. Functionally, prenyltransferase that catalyzes the transfer of the geranylgeranyl moiety of geranylgeranyl diphosphate (GGPP) to the C3 hydroxyl of sn-glycerol-1-phosphate (G1P). The polypeptide is Geranylgeranylglyceryl phosphate synthase (Zunongwangia profunda (strain DSM 18752 / CCTCC AB 206139 / SM-A87) (Wangia profunda)).